Consider the following 512-residue polypeptide: Cytochrome P450 monooxygenase paxQ (512 aa).

The next 2 helical transmembrane spans lie at 3–23 (FVLS…LVSI) and 35–55 (LQIP…ISAL). Cys-453 provides a ligand contact to heme.

Belongs to the cytochrome P450 family. The cofactor is heme.

The protein localises to the membrane. It functions in the pathway secondary metabolite biosynthesis. In terms of biological role, cytochrome P450 monooxygenase; part of the gene cluster that mediates the biosynthesis of paxilline, a mycotoxin that acts as an inhibitor of mammalian maxi-K channels. PaxG, the geranylgeranyl diphosphate (GGPP) synthase is proposed to catalyze the first step in paxilline biosynthesis. Condensation of indole-3-glycerol phosphate with GGPP by paxC then forms 3-geranylgeranylindole (3-GGI), followed by epoxidation and cyclization of this intermediate (by paxM and paxB) to form paspaline. Paspaline is subsequently converted to 13-desoxypaxilline by paxP, the latter being then converted to paxilline by paxQ. Finally paxilline can be mono- and di-prenylated by paxD. PaxQ can also utilized beta-paxitriol and alpha-PC-M6 as substrates converting them to alpha-paxitriol. The sequence is that of Cytochrome P450 monooxygenase paxQ from Penicillium paxilli.